The following is a 388-amino-acid chain: MSEDRTGHQGISGPATRAIHAGYRPDPATGAVNVPIYASSTFAQDGVGGLRGGFEYARTGNPTRAALEASLAAVEEGAFARAFSSGMAATDCALRAMLRPGDHVVIPDDAYGGTFRLIDKVFTRWDVQYTPVRLADLDAVGAAITPRTRLIWVETPTNPLLSIADITAIAELGTDRSAKVLVDNTFASPALQQPLRLGADVVLHSTTKYIGGHSDVVGGALVTNDEELDEEFAFLQNGAGAVPGPFDAYLTMRGLKTLVLRMQRHSENACAVAEFLADHPSVSSVLYPGLPSHPGHEIAARQMRGFGGMVSVRMRAGRRAAQDLCAKTRVFILAESLGGVESLIEHPSAMTHASTAGSQLEVPDDLVRLSVGIEDIADLLGDLEQALG.

The interval 1 to 24 is disordered; sequence MSEDRTGHQGISGPATRAIHAGYR. At K208 the chain carries N6-(pyridoxal phosphate)lysine.

Belongs to the trans-sulfuration enzymes family. Homotetramer. The cofactor is pyridoxal 5'-phosphate.

It localises to the cytoplasm. It carries out the reaction O-succinyl-L-homoserine + L-cysteine = L,L-cystathionine + succinate + H(+). Functionally, catalyzes the formation of L-cystathionine from O-succinyl-L-homoserine (OSHS) and L-cysteine, via a gamma-replacement reaction. In the absence of thiol, catalyzes gamma-elimination to form 2-oxobutanoate, succinate and ammonia. The chain is Cystathionine gamma-synthase (metB) from Mycobacterium bovis (strain ATCC BAA-935 / AF2122/97).